The sequence spans 217 residues: KH domain-containing protein 3 (217 aa).

Positions Met-1–Lys-40 are involved in RNA binding. The KH; atypical domain occupies Lys-40 to Ile-103. The tract at residues Gln-129–Leu-217 is disordered. Basic and acidic residues predominate over residues Ile-138–Gly-155. Thr-145 and Thr-156 each carry phosphothreonine; by ATM. Polar residues-rich tracts occupy residues Thr-156–Ser-170 and Ala-177–Ser-194. A Phosphoserine modification is found at Ser-182. Positions Arg-205–Leu-217 are enriched in basic and acidic residues.

This sequence belongs to the KHDC1 family. Component of the subcortical maternal complex (SCMC), at least composed of NLRP5, KHDC3L, OOEP, and TLE6 isoform 1. Within the complex, interacts with NLRP5, KHDC3L and TLE6 isoform 1. The SCMC may facilitate translocation of its components between the nuclear and cytoplasmic compartments. Forms a scaffold complex with OOEP/FLOPED, and interacts with BLM and TRIM25 at DNA replication forks. Interacts with PARP1; the interaction is increased following the formation of DNA double-strand breaks. Interacts with NUMA1. In terms of tissue distribution, expression appears to be maximal in germinal vesicle oocytes, it tails off through metaphase II oocytes and is undetectable following the completion of the oocyte to embryo transition.

It is found in the cytoplasm. The protein localises to the cell cortex. It localises to the nucleus. Its subcellular location is the mitochondrion. The protein resides in the cytoskeleton. It is found in the microtubule organizing center. The protein localises to the centrosome. It localises to the chromosome. In terms of biological role, component of the subcortical maternal complex (SCMC), a multiprotein complex that plays a key role in early embryonic development. The SCMC complex is a structural constituent of cytoplasmic lattices, which consist in fibrous structures found in the cytoplasm of oocytes and preimplantation embryos. They are required to store maternal proteins critical for embryonic development, such as proteins that control epigenetic reprogramming of the preimplantation embryo, and prevent their degradation or activation. KHDC3 ensures proper spindle assembly by regulating the localization of AURKA via RHOA signaling and of PLK1 via a RHOA-independent process. Required for the localization of MAD2L1 to kinetochores to enable spindle assembly checkpoint function. As part of the OOEP-KHDC3 scaffold, recruits BLM and TRIM25 to DNA replication forks, thereby promoting the ubiquitination of BLM by TRIM25, enhancing BLM retainment at replication forks and therefore promoting stalled replication fork restart. Regulates homologous recombination-mediated DNA repair via recruitment of RAD51 to sites of DNA double-strand breaks, and sustainment of PARP1 activity, which in turn modulates downstream ATM or ATR activation. Activation of ATM or ATR in response to DNA double-strand breaks may be cell-type specific. Its role in DNA double-strand break repair is independent of its role in restarting stalled replication forks. Promotes neural stem cell neurogenesis and neuronal differentiation in the hippocampus. May regulate normal development of learning, memory and anxiety. Capable of binding RNA. In Homo sapiens (Human), this protein is KH domain-containing protein 3.